Here is a 273-residue protein sequence, read N- to C-terminus: Putative pyruvate, phosphate dikinase regulatory protein (273 aa).

153–160 (GVSRTSKS) contacts ADP.

The protein belongs to the pyruvate, phosphate/water dikinase regulatory protein family. PDRP subfamily.

It carries out the reaction N(tele)-phospho-L-histidyl/L-threonyl-[pyruvate, phosphate dikinase] + ADP = N(tele)-phospho-L-histidyl/O-phospho-L-threonyl-[pyruvate, phosphate dikinase] + AMP + H(+). The enzyme catalyses N(tele)-phospho-L-histidyl/O-phospho-L-threonyl-[pyruvate, phosphate dikinase] + phosphate + H(+) = N(tele)-phospho-L-histidyl/L-threonyl-[pyruvate, phosphate dikinase] + diphosphate. Bifunctional serine/threonine kinase and phosphorylase involved in the regulation of the pyruvate, phosphate dikinase (PPDK) by catalyzing its phosphorylation/dephosphorylation. The sequence is that of Putative pyruvate, phosphate dikinase regulatory protein from Ehrlichia ruminantium (strain Gardel).